Here is a 139-residue protein sequence, read N- to C-terminus: D-ribose pyranase (139 aa).

H20 serves as the catalytic Proton donor. Residues D28, H106, and Y128–N130 each bind substrate.

It belongs to the RbsD / FucU family. RbsD subfamily. As to quaternary structure, homodecamer.

It is found in the cytoplasm. It catalyses the reaction beta-D-ribopyranose = beta-D-ribofuranose. It participates in carbohydrate metabolism; D-ribose degradation; D-ribose 5-phosphate from beta-D-ribopyranose: step 1/2. Catalyzes the interconversion of beta-pyran and beta-furan forms of D-ribose. This chain is D-ribose pyranase, found in Pasteurella multocida (strain Pm70).